Here is a 704-residue protein sequence, read N- to C-terminus: Glycine--tRNA ligase beta subunit (704 aa).

This sequence belongs to the class-II aminoacyl-tRNA synthetase family. In terms of assembly, tetramer of two alpha and two beta subunits.

It localises to the cytoplasm. The enzyme catalyses tRNA(Gly) + glycine + ATP = glycyl-tRNA(Gly) + AMP + diphosphate. The polypeptide is Glycine--tRNA ligase beta subunit (Rhizobium etli (strain CIAT 652)).